The sequence spans 191 residues: Rho-related GTP-binding protein RhoG (191 aa).

10–17 (GDGAVGKT) is a GTP binding site. The Effector region signature appears at 32-40 (YIPTVFDNY). GTP contacts are provided by residues 57–61 (DTAGQ) and 115–118 (TKKD). 2 positions are modified to phosphothreonine: Thr-138 and Thr-180. A Cysteine methyl ester modification is found at Cys-188. Residue Cys-188 is the site of S-geranylgeranyl cysteine attachment. A propeptide spans 189–191 (ILL) (removed in mature form).

The protein belongs to the small GTPase superfamily. Rho family. As to quaternary structure, interacts with ARHGEF26. Interacts with ARHGEF16. Interacts with UNC13D; the interaction increases RhoG affinity to the membrane lipids, targets UNC13D to membrane lipids and facilitates cytotoxic granule (CG) docking to the plasma membrane.

The protein localises to the cell membrane. In terms of biological role, plays a role in immunological synaptic F-actin density and architecture organization. Regulates actin reorganization in lymphocytes, possibly through the modulation of Rac1 activity. Required for the formation of membrane ruffles during macropinocytosis. Plays a role in cell migration and is required for the formation of cup-like structures during trans-endothelial migration of leukocytes. Binds phospholipids in an activation-dependent manner; thereby acting as an anchor for other proteins to the plasma membrane (PM). Plays a role in exocytosis of cytotoxic granules (CG) by lymphocytes/Component of the exocytosis machinery in natural killer (NK) and CD8+ T cells. Promotes the docking of cytotoxic granules (CG) to the plasma membrane through the interaction with UNC13D. Involved in the cytotoxic activity of lymphocytes/primary CD8+ T cells. The polypeptide is Rho-related GTP-binding protein RhoG (RHOG) (Cricetus cricetus (Black-bellied hamster)).